Consider the following 780-residue polypeptide: MASAELQGKYQKLAQEYSKLRAQNQVLKKGVVDEQANSAALKEQLKMKDQSLRKLQQEMDSLTFRNLQLAKRVELLQDELALSEPRGKKNKKSGESSSQLSQEQKSVFDEDLQKKIEENERLHIQFFEADEQHKHVEAELRSRLATLETEAAQHQAVVDGLTRKYMETIEKLQNDKAKLEVKSQTLEKEAKECRLRTEECQLQLKTLHEDLSGRLEESLSIINEKVPFNDTKYSQYNALNVPLHNRRHQLKMRDIAGQALAFVQDLVTALLNFHTYTEQRIQIFPVDSAIDTISPLNQKFSQYLHENASYVRPLEEGMLHLFESITEDTVTVLETTVKLKTFSEHLTSYICFLRKILPYQLKSLEEECESSLCTSALRARNLELSQDMKKMTAVFEKLQTYIALLALPSTEPDGLLRTNYSSVLTNVGAALHGFHDVMKDISKHYSQKAAIEHELPTATQKLITTNDCILSSVVALTNGAGKIASFFSNNLDYFIASLSYGPKAASGFISPLSAECMLQYKKKAAAYMKSLRKPLLESVPYEEALANRRILLSSTESREGLAQQVQQSLEKISKLEQEKEHWMLEAQLAKIKLEKENQRIADKLKNTGSAQLVGLAQENAAVSNTAGQDEATAKAVLEPIQSTSLIGTLTRTSDSEVPDVESREDLIKNHYMARIVELTSQLQLADSKSVHFYAECRALSKRLALAEKSKEALTEEMKLASQNISRLQDELTTTKRSYEDQLSMMSDHLCSMNETLSKQREEIDTLKMSSKGNSKKNKSR.

2 coiled-coil regions span residues 1–207 (MASA…LKTL) and 556–607 (ESRE…LKNT). The segment at 84–104 (EPRGKKNKKSGESSSQLSQEQ) is disordered. The segment covering 95-104 (ESSSQLSQEQ) has biased composition (low complexity). A Phosphothreonine modification is found at threonine 652. A coiled-coil region spans residues 693–742 (YAECRALSKRLALAEKSKEALTEEMKLASQNISRLQDELTTTKRSYEDQL). A disordered region spans residues 760–780 (REEIDTLKMSSKGNSKKNKSR).

As to quaternary structure, component of the FERRY complex, composed of five subunits: TBCK, PPP1R21, FERRY3, CRYZL1 and GATAD1, with a ratio of 1:2:1:2:4 respectively. PPP1R21 serves as a binding hub connecting all five complex subunits to mediate the binding to specific mitochondrial mRNAs. Interacts with the GTP-bound form of RAB5A (via its C-terminal region); linking the mRNP complex onto trafficking endosomes for active mRNA transport. Interacts with PPP1CA.

The protein localises to the early endosome. In terms of biological role, component of the FERRY complex (Five-subunit Endosomal Rab5 and RNA/ribosome intermediary). The FERRY complex directly interacts with mRNAs and RAB5A, and functions as a RAB5A effector involved in the localization and the distribution of specific mRNAs most likely by mediating their endosomal transport. The complex recruits mRNAs and ribosomes to early endosomes through direct mRNA-interaction. In the complex, PPP1R21 serves as a binding hub connecting all five complex subunits and mediating the binding to mRNA and early endosomes via RAB5A. Putative regulator of protein phosphatase 1 (PP1) activity. May play a role in the endosomal sorting process or in endosome maturation pathway. This is Protein phosphatase 1 regulatory subunit 21 (PPP1R21) from Homo sapiens (Human).